A 428-amino-acid chain; its full sequence is Dihydroorotase (428 aa).

Zn(2+) is bound by residues histidine 56 and histidine 58. Substrate contacts are provided by residues 58 to 60 (HLR) and asparagine 90. Residues aspartate 150, histidine 177, and histidine 230 each coordinate Zn(2+). Position 276 (asparagine 276) interacts with substrate. Aspartate 303 contacts Zn(2+). Residue aspartate 303 is part of the active site. Histidine 307 lines the substrate pocket.

Belongs to the metallo-dependent hydrolases superfamily. DHOase family. Class I DHOase subfamily. It depends on Zn(2+) as a cofactor.

The catalysed reaction is (S)-dihydroorotate + H2O = N-carbamoyl-L-aspartate + H(+). It participates in pyrimidine metabolism; UMP biosynthesis via de novo pathway; (S)-dihydroorotate from bicarbonate: step 3/3. Catalyzes the reversible cyclization of carbamoyl aspartate to dihydroorotate. This chain is Dihydroorotase, found in Streptomyces coelicolor (strain ATCC BAA-471 / A3(2) / M145).